The primary structure comprises 243 residues: CR(VI) reductase (243 aa).

The protein belongs to the flavin oxidoreductase frp family. Requires FMN as cofactor.

This is CR(VI) reductase (chrR) from Pseudomonas sp. (strain G-1).